A 397-amino-acid polypeptide reads, in one-letter code: Tryptophan synthase beta chain (397 aa).

Lysine 87 is modified (N6-(pyridoxal phosphate)lysine).

Belongs to the TrpB family. As to quaternary structure, tetramer of two alpha and two beta chains. The cofactor is pyridoxal 5'-phosphate.

The enzyme catalyses (1S,2R)-1-C-(indol-3-yl)glycerol 3-phosphate + L-serine = D-glyceraldehyde 3-phosphate + L-tryptophan + H2O. It functions in the pathway amino-acid biosynthesis; L-tryptophan biosynthesis; L-tryptophan from chorismate: step 5/5. In terms of biological role, the beta subunit is responsible for the synthesis of L-tryptophan from indole and L-serine. The sequence is that of Tryptophan synthase beta chain from Salmonella arizonae (strain ATCC BAA-731 / CDC346-86 / RSK2980).